The primary structure comprises 359 residues: Ribosomal RNA small subunit methyltransferase H (359 aa).

Residues 39 to 41 (AGH), aspartate 58, phenylalanine 87, aspartate 108, and glutamine 115 each bind S-adenosyl-L-methionine. The segment at 339–359 (IQGSASPGRAKNTARIRTRRG) is disordered. Residues 350–359 (NTARIRTRRG) show a composition bias toward basic residues.

It belongs to the methyltransferase superfamily. RsmH family.

Its subcellular location is the cytoplasm. The catalysed reaction is cytidine(1402) in 16S rRNA + S-adenosyl-L-methionine = N(4)-methylcytidine(1402) in 16S rRNA + S-adenosyl-L-homocysteine + H(+). Specifically methylates the N4 position of cytidine in position 1402 (C1402) of 16S rRNA. This chain is Ribosomal RNA small subunit methyltransferase H, found in Bifidobacterium longum subsp. infantis (strain ATCC 15697 / DSM 20088 / JCM 1222 / NCTC 11817 / S12).